Reading from the N-terminus, the 316-residue chain is L-lactate dehydrogenase 3 (316 aa).

NAD(+)-binding residues include valine 16, aspartate 37, arginine 42, and tyrosine 68. A substrate-binding site is contributed by arginine 91. NAD(+) contacts are provided by residues serine 104, 121–123 (ASN), and threonine 146. 123–126 (NPVD) is a substrate binding site. Position 151–154 (151–154 (DSSR)) interacts with substrate. Arginine 156 and histidine 171 together coordinate beta-D-fructose 1,6-bisphosphate. The active-site Proton acceptor is the histidine 178. Threonine 233 contacts substrate.

This sequence belongs to the LDH/MDH superfamily. LDH family. In terms of assembly, homotetramer.

The protein resides in the cytoplasm. It catalyses the reaction (S)-lactate + NAD(+) = pyruvate + NADH + H(+). Its pathway is fermentation; pyruvate fermentation to lactate; (S)-lactate from pyruvate: step 1/1. With respect to regulation, allosterically activated by fructose 1,6-bisphosphate (FBP). In terms of biological role, catalyzes the conversion of lactate to pyruvate. The sequence is that of L-lactate dehydrogenase 3 from Bacillus cereus (strain ATCC 14579 / DSM 31 / CCUG 7414 / JCM 2152 / NBRC 15305 / NCIMB 9373 / NCTC 2599 / NRRL B-3711).